The chain runs to 122 residues: Large ribosomal subunit protein uL14 (122 aa).

It belongs to the universal ribosomal protein uL14 family. Part of the 50S ribosomal subunit. Forms a cluster with proteins L3 and L19. In the 70S ribosome, L14 and L19 interact and together make contacts with the 16S rRNA in bridges B5 and B8.

Functionally, binds to 23S rRNA. Forms part of two intersubunit bridges in the 70S ribosome. The protein is Large ribosomal subunit protein uL14 of Lactobacillus delbrueckii subsp. bulgaricus (strain ATCC 11842 / DSM 20081 / BCRC 10696 / JCM 1002 / NBRC 13953 / NCIMB 11778 / NCTC 12712 / WDCM 00102 / Lb 14).